Here is a 293-residue protein sequence, read N- to C-terminus: Acetylglutamate kinase (293 aa).

Residues 68 to 69, R90, and N189 contribute to the substrate site; that span reads GG.

The protein belongs to the acetylglutamate kinase family. ArgB subfamily.

It localises to the cytoplasm. The catalysed reaction is N-acetyl-L-glutamate + ATP = N-acetyl-L-glutamyl 5-phosphate + ADP. The protein operates within amino-acid biosynthesis; L-arginine biosynthesis; N(2)-acetyl-L-ornithine from L-glutamate: step 2/4. In terms of biological role, catalyzes the ATP-dependent phosphorylation of N-acetyl-L-glutamate. The chain is Acetylglutamate kinase from Mycobacterium ulcerans (strain Agy99).